Consider the following 448-residue polypeptide: Exoglucanase GH7B (448 aa).

Positions 1 to 17 are cleaved as a signal peptide; sequence MSLAVVFLLGFLAVSHG. A Pyrrolidone carboxylic acid modification is found at glutamine 18. Intrachain disulfides connect cysteine 62–cysteine 83 and cysteine 73–cysteine 79. Substrate-binding positions include tyrosine 97, 119 to 120, and lysine 197; that span reads DI. Cystine bridges form between cysteine 154–cysteine 415, cysteine 188–cysteine 226, cysteine 192–cysteine 225, cysteine 246–cysteine 271, cysteine 254–cysteine 259, and cysteine 276–cysteine 350. Residue glutamate 228 is the Nucleophile of the active site. Residues 230–233 and histidine 244 each bind substrate; that span reads DIWE. Residue glutamate 233 is the Proton donor/acceptor of the active site. Residues arginine 266 and aspartate 274 each coordinate substrate. Tryptophan 396 and arginine 412 together coordinate substrate.

Belongs to the glycosyl hydrolase 7 (cellulase C) family. Monomer. In terms of tissue distribution, highly expressed in the hepatopancreas (at protein level). Little or no expression detected in the hindgut or the rest of the body (at protein level).

The protein localises to the secreted. The enzyme catalyses Hydrolysis of (1-&gt;4)-beta-D-glucosidic linkages in cellulose and cellotetraose, releasing cellobiose from the non-reducing ends of the chains.. Its function is as follows. Exocellobiohydrolase (CBH) that catalyzes the hydrolysis of 1,4-beta-D-glucosidic bonds in cellulose to release the disaccharide cellobiose. The degradation of cellulose involves an interplay between different cellulolytic enzymes. Hydrolysis starts with endoglucanases (EGs), which cut internal beta-1,4-glucosidic bonds in cellulose to reduce the polymerization degree of the substrate and create new chain ends for exocellobiohydrolases (CBHs). The CBHs release the disaccharide cellobiose from the non-reducing end of the cellulose polymer chain. Finally, beta-1,4-glucosidases hydrolyze the cellobiose and other short cello-oligosaccharides into glucose units. This chain is Exoglucanase GH7B, found in Limnoria quadripunctata (Gribble).